The sequence spans 238 residues: Lactate utilization protein A (238 aa).

It belongs to the LutA/YkgE family.

In terms of biological role, is involved in L-lactate degradation and allows cells to grow with lactate as the sole carbon source. This Bacillus licheniformis (strain ATCC 14580 / DSM 13 / JCM 2505 / CCUG 7422 / NBRC 12200 / NCIMB 9375 / NCTC 10341 / NRRL NRS-1264 / Gibson 46) protein is Lactate utilization protein A.